We begin with the raw amino-acid sequence, 209 residues long: Prolactin (209 aa).

A signal peptide spans 1–24 (MAQRFKGSNLFLTALLCLASQGHA). 2 disulfide bridges follow: Cys-70–Cys-184 and Cys-201–Cys-209.

Belongs to the somatotropin/prolactin family.

It localises to the secreted. In Anguilla japonica (Japanese eel), this protein is Prolactin (prl).